The following is a 428-amino-acid chain: Putative gustatory receptor 2a (428 aa).

Residues 1–40 (MDTLRALEPLHRACQVCNLWPWRLAPPPDSEGILLRRSRW) are Cytoplasmic-facing. Residues 41-61 (LELYGWTVLIAATSFTVYGLF) traverse the membrane as a helical segment. At 62–145 (QESSVEEKQD…INMRRQTSRR (84 aa)) the chain is on the extracellular side. The chain crosses the membrane as a helical span at residues 146 to 166 (AVWILWGYAVSQLLILGAKLL). Residues 167–173 (SRGDRFP) are Cytoplasmic-facing. Residues 174–194 (IYWISYLLPLLVCGLRYFQIF) form a helical membrane-spanning segment. An N-linked (GlcNAc...) asparagine glycan is attached at asparagine 195. Topologically, residues 195–250 (NATQLVRQRLDVLLVALQQLQLHQKGPAVDTVLEEQEDLEEAAMDRLIAVRLVYQR) are extracellular. Residues 251-271 (VWALVALLNRCYGLSMLMQVG) form a helical membrane-spanning segment. Residues 272–300 (NDFLAITSNCYWMFLNFRQSAASPFDILQ) are Cytoplasmic-facing. Residues 301–321 (IVASGVWSAPHLGNVLVLSLL) form a helical membrane-spanning segment. The Extracellular portion of the chain corresponds to 322–349 (CDRTAQCASRLALCLHQVSVDLRNESHN). Residue asparagine 345 is glycosylated (N-linked (GlcNAc...) asparagine). A helical transmembrane segment spans residues 350-370 (ALVGTLVRYCAPLIILVPLQI). Topologically, residues 371–395 (TQFSLQLLHQRLHFSAAGFFNVDCT) are cytoplasmic. The helical transmembrane segment at 396–416 (LLYTIVGATTTYLIILIQFHM) threads the bilayer. Residues 417–428 (SESTIGSDSNGQ) lie on the Extracellular side of the membrane.

This sequence belongs to the insect chemoreceptor superfamily. Gustatory receptor (GR) family. Gr2a subfamily. In terms of tissue distribution, expressed in neurons of the terminal external chemosensory organ, the dorsal external chemosensory organ, as well as in the dorsal pharyngeal sense organ of larvae.

It is found in the cell membrane. Functionally, probable gustatory receptor which mediates acceptance or avoidance behavior, depending on its not yet determined substrates. This is Putative gustatory receptor 2a (Gr2a) from Drosophila melanogaster (Fruit fly).